The primary structure comprises 323 residues: tRNA uridine(34) hydroxylase (323 aa).

The Rhodanese domain occupies 123-217 (SDPDVVVIDT…YLETIPEEES (95 aa)). The Cysteine persulfide intermediate role is filled by cysteine 177.

It belongs to the TrhO family.

It carries out the reaction uridine(34) in tRNA + AH2 + O2 = 5-hydroxyuridine(34) in tRNA + A + H2O. Its function is as follows. Catalyzes oxygen-dependent 5-hydroxyuridine (ho5U) modification at position 34 in tRNAs. The polypeptide is tRNA uridine(34) hydroxylase (Methylobacillus flagellatus (strain ATCC 51484 / DSM 6875 / VKM B-1610 / KT)).